A 436-amino-acid chain; its full sequence is Glutamyl-tRNA reductase (436 aa).

Substrate-binding positions include 49-52 (TCNR), Ser-109, 114-116 (EGQ), and Gln-120. The active-site Nucleophile is Cys-50. 198–203 (GAGRMS) serves as a coordination point for NADP(+).

It belongs to the glutamyl-tRNA reductase family. Homodimer.

The enzyme catalyses (S)-4-amino-5-oxopentanoate + tRNA(Glu) + NADP(+) = L-glutamyl-tRNA(Glu) + NADPH + H(+). The protein operates within porphyrin-containing compound metabolism; protoporphyrin-IX biosynthesis; 5-aminolevulinate from L-glutamyl-tRNA(Glu): step 1/2. Its pathway is porphyrin-containing compound metabolism; chlorophyll biosynthesis. In terms of biological role, catalyzes the NADPH-dependent reduction of glutamyl-tRNA(Glu) to glutamate 1-semialdehyde (GSA). The polypeptide is Glutamyl-tRNA reductase (Prochlorococcus marinus (strain MIT 9312)).